The sequence spans 316 residues: FAD:protein FMN transferase (316 aa).

FAD is bound by residues methionine 14, 88–90 (AFN), and aspartate 146. Alanine 149 lines the Mg(2+) pocket. Positions 152 and 231 each coordinate FAD. 2 residues coordinate Mg(2+): aspartate 257 and threonine 261.

Belongs to the ApbE family. It depends on Mg(2+) as a cofactor.

It localises to the cytoplasm. It carries out the reaction L-threonyl-[protein] + FAD = FMN-L-threonyl-[protein] + AMP + H(+). In terms of biological role, flavin transferase that catalyzes the transfer of the FMN moiety of FAD and its covalent binding to the hydroxyl group of a threonine residue in a target flavoprotein. Is responsible for the modification of the fumarate reductase KPK_2907. The protein is FAD:protein FMN transferase of Klebsiella pneumoniae (strain 342).